Reading from the N-terminus, the 547-residue chain is Chaperonin GroEL 1 (547 aa).

Residues 30–33 (TLGP), K51, 87–91 (DGTTT), G415, and D496 contribute to the ATP site. Positions 525–547 (KPEPKSPAGGPGMGGMGGMDGMM) are disordered. The span at 533–547 (GGPGMGGMGGMDGMM) shows a compositional bias: gly residues.

The protein belongs to the chaperonin (HSP60) family. As to quaternary structure, forms a cylinder of 14 subunits composed of two heptameric rings stacked back-to-back. Interacts with the co-chaperonin GroES.

It localises to the cytoplasm. It carries out the reaction ATP + H2O + a folded polypeptide = ADP + phosphate + an unfolded polypeptide.. Its function is as follows. Together with its co-chaperonin GroES, plays an essential role in assisting protein folding. The GroEL-GroES system forms a nano-cage that allows encapsulation of the non-native substrate proteins and provides a physical environment optimized to promote and accelerate protein folding. In Cereibacter sphaeroides (strain ATCC 17023 / DSM 158 / JCM 6121 / CCUG 31486 / LMG 2827 / NBRC 12203 / NCIMB 8253 / ATH 2.4.1.) (Rhodobacter sphaeroides), this protein is Chaperonin GroEL 1.